An 82-amino-acid polypeptide reads, in one-letter code: Small ribosomal subunit protein bS16 (82 aa).

The protein belongs to the bacterial ribosomal protein bS16 family.

This chain is Small ribosomal subunit protein bS16, found in Marinomonas sp. (strain MWYL1).